The sequence spans 142 residues: Large ribosomal subunit protein uL13 (142 aa).

The protein belongs to the universal ribosomal protein uL13 family. In terms of assembly, part of the 50S ribosomal subunit.

This protein is one of the early assembly proteins of the 50S ribosomal subunit, although it is not seen to bind rRNA by itself. It is important during the early stages of 50S assembly. This Chromobacterium violaceum (strain ATCC 12472 / DSM 30191 / JCM 1249 / CCUG 213 / NBRC 12614 / NCIMB 9131 / NCTC 9757 / MK) protein is Large ribosomal subunit protein uL13.